Consider the following 389-residue polypeptide: Chitin-binding protein CbpD (389 aa).

A signal peptide spans 1-25 (MKHYSATLALLPLTLALFLPQAAHA). In terms of domain architecture, Chitin-binding type-4 spans 26 to 208 (HGSMETPPSR…EAFYACIDVS (183 aa)). A Phosphotyrosine modification is found at tyrosine 37. At serine 210 the chain carries Phosphoserine.

Its subcellular location is the secreted. Functionally, binds but does not hydrolyze chitin. The chain is Chitin-binding protein CbpD (cpbD) from Pseudomonas aeruginosa (strain UCBPP-PA14).